A 287-amino-acid chain; its full sequence is Ribosomal RNA small subunit methyltransferase A (287 aa).

Residues Asn-28, Leu-30, Gly-55, Glu-77, Asp-103, and Asn-123 each contribute to the S-adenosyl-L-methionine site.

The protein belongs to the class I-like SAM-binding methyltransferase superfamily. rRNA adenine N(6)-methyltransferase family. RsmA subfamily.

It localises to the cytoplasm. The enzyme catalyses adenosine(1518)/adenosine(1519) in 16S rRNA + 4 S-adenosyl-L-methionine = N(6)-dimethyladenosine(1518)/N(6)-dimethyladenosine(1519) in 16S rRNA + 4 S-adenosyl-L-homocysteine + 4 H(+). Functionally, specifically dimethylates two adjacent adenosines (A1518 and A1519) in the loop of a conserved hairpin near the 3'-end of 16S rRNA in the 30S particle. May play a critical role in biogenesis of 30S subunits. This chain is Ribosomal RNA small subunit methyltransferase A, found in Nitrobacter winogradskyi (strain ATCC 25391 / DSM 10237 / CIP 104748 / NCIMB 11846 / Nb-255).